The sequence spans 494 residues: Arp2/3 complex-activating protein rickA (494 aa).

The tract at residues 312–494 (PLENNIPPPP…RNSQKPSFVR (183 aa)) is disordered. A compositionally biased stretch (pro residues) spans 317–357 (IPPPPPPPPPLPDNNIPPPPPPPPPLPDNNIPPPPPPPPMA). One can recognise a WH2 domain in the interval 383–400 (DTSDLMREIAGPKKLKKV). The segment at 421 to 454 (VNKPSGLESIFARRVAIEMSDSSSSESDSGNWSD) is central and acidic domains. Residues 440–456 (SDSSSSESDSGNWSDVS) are compositionally biased toward low complexity. A compositionally biased stretch (polar residues) spans 477 to 494 (THAQKINNRNSQKPSFVR).

The protein localises to the cell surface. Its function is as follows. Recruits and activates the Arp2/3 complex, which in turn leads to actin polymerization, promoting Rickettsia motility during infection. The sequence is that of Arp2/3 complex-activating protein rickA (rickA) from Rickettsia rickettsii.